The chain runs to 62 residues: MIPVRCFTCGKVVSTAWKEFKERRDAGEDPKRILDDLGLERYCCRRMLLTHKETVEDLNPYQ.

Residues Cys-6, Cys-9, Cys-43, and Cys-44 each coordinate Zn(2+).

This sequence belongs to the archaeal Rpo10/eukaryotic RPB10 RNA polymerase subunit family. Part of the RNA polymerase complex. It depends on Zn(2+) as a cofactor.

It is found in the cytoplasm. It catalyses the reaction RNA(n) + a ribonucleoside 5'-triphosphate = RNA(n+1) + diphosphate. Functionally, DNA-dependent RNA polymerase (RNAP) catalyzes the transcription of DNA into RNA using the four ribonucleoside triphosphates as substrates. This is DNA-directed RNA polymerase subunit Rpo10 from Methanoculleus marisnigri (strain ATCC 35101 / DSM 1498 / JR1).